The primary structure comprises 123 residues: UPF0482 protein YE2026 (123 aa).

The signal sequence occupies residues 1–31 (MKITSLPRLMRVFLPVAVLALPLAWQTAALA). Positions 47–66 (GNNDPMSKEQARQSQQQWDD) are disordered.

Belongs to the UPF0482 family.

This Yersinia enterocolitica serotype O:8 / biotype 1B (strain NCTC 13174 / 8081) protein is UPF0482 protein YE2026.